We begin with the raw amino-acid sequence, 232 residues long: Sugar fermentation stimulation protein homolog (232 aa).

Belongs to the SfsA family.

This chain is Sugar fermentation stimulation protein homolog, found in Pelagibacter ubique (strain HTCC1062).